The following is a 451-amino-acid chain: UPF0210 protein CA_C0479 (451 aa).

Belongs to the UPF0210 family. Homodimer.

The sequence is that of UPF0210 protein CA_C0479 from Clostridium acetobutylicum (strain ATCC 824 / DSM 792 / JCM 1419 / IAM 19013 / LMG 5710 / NBRC 13948 / NRRL B-527 / VKM B-1787 / 2291 / W).